A 286-amino-acid polypeptide reads, in one-letter code: Pantothenate synthetase (286 aa).

An ATP-binding site is contributed by 30 to 37 (MGNLHEGH). The Proton donor role is filled by histidine 37. Position 64 (glutamine 64) interacts with (R)-pantoate. Beta-alanine is bound at residue glutamine 64. 151-154 (GKKD) contributes to the ATP binding site. Glutamine 157 is a (R)-pantoate binding site. ATP-binding positions include leucine 180 and 188–191 (LSSR).

This sequence belongs to the pantothenate synthetase family. As to quaternary structure, homodimer.

The protein localises to the cytoplasm. It catalyses the reaction (R)-pantoate + beta-alanine + ATP = (R)-pantothenate + AMP + diphosphate + H(+). It participates in cofactor biosynthesis; (R)-pantothenate biosynthesis; (R)-pantothenate from (R)-pantoate and beta-alanine: step 1/1. Its function is as follows. Catalyzes the condensation of pantoate with beta-alanine in an ATP-dependent reaction via a pantoyl-adenylate intermediate. This Leptothrix cholodnii (strain ATCC 51168 / LMG 8142 / SP-6) (Leptothrix discophora (strain SP-6)) protein is Pantothenate synthetase.